A 241-amino-acid chain; its full sequence is 1-(5-phosphoribosyl)-5-[(5-phosphoribosylamino)methylideneamino] imidazole-4-carboxamide isomerase (241 aa).

The active-site Proton acceptor is Asp-8. The active-site Proton donor is Asp-129.

The protein belongs to the HisA/HisF family.

It localises to the cytoplasm. The enzyme catalyses 1-(5-phospho-beta-D-ribosyl)-5-[(5-phospho-beta-D-ribosylamino)methylideneamino]imidazole-4-carboxamide = 5-[(5-phospho-1-deoxy-D-ribulos-1-ylimino)methylamino]-1-(5-phospho-beta-D-ribosyl)imidazole-4-carboxamide. Its pathway is amino-acid biosynthesis; L-histidine biosynthesis; L-histidine from 5-phospho-alpha-D-ribose 1-diphosphate: step 4/9. This chain is 1-(5-phosphoribosyl)-5-[(5-phosphoribosylamino)methylideneamino] imidazole-4-carboxamide isomerase, found in Chloroflexus aurantiacus (strain ATCC 29364 / DSM 637 / Y-400-fl).